The sequence spans 331 residues: Glyceraldehyde-3-phosphate dehydrogenase (331 aa).

NAD(+)-binding positions include 12–13 (RI), Asp-34, Arg-78, and Thr-120. N6-acetyllysine occurs at positions 132 and 138. D-glyceraldehyde 3-phosphate is bound by residues 149–151 (SCT) and Thr-180. The active-site Nucleophile is the Cys-150. At Lys-192 the chain carries N6-acetyllysine. D-glyceraldehyde 3-phosphate is bound by residues 209 to 210 (TG) and Arg-232. At Lys-249 the chain carries N6-acetyllysine. Residue Asn-314 coordinates NAD(+).

Belongs to the glyceraldehyde-3-phosphate dehydrogenase family. Homotetramer.

It localises to the cytoplasm. The enzyme catalyses D-glyceraldehyde 3-phosphate + phosphate + NAD(+) = (2R)-3-phospho-glyceroyl phosphate + NADH + H(+). The protein operates within carbohydrate degradation; glycolysis; pyruvate from D-glyceraldehyde 3-phosphate: step 1/5. Its function is as follows. Catalyzes the oxidative phosphorylation of glyceraldehyde 3-phosphate (G3P) to 1,3-bisphosphoglycerate (BPG) using the cofactor NAD. The first reaction step involves the formation of a hemiacetal intermediate between G3P and a cysteine residue, and this hemiacetal intermediate is then oxidized to a thioester, with concomitant reduction of NAD to NADH. The reduced NADH is then exchanged with the second NAD, and the thioester is attacked by a nucleophilic inorganic phosphate to produce BPG. This is Glyceraldehyde-3-phosphate dehydrogenase (gapA) from Escherichia coli O6:H1 (strain CFT073 / ATCC 700928 / UPEC).